The chain runs to 317 residues: U5 small nuclear ribonucleoprotein TSSC4 (317 aa).

Residues 1 to 19 (MAETEAGLEADEPTEDDTL) show a composition bias toward acidic residues. Residues 1–74 (MAETEAGLEA…PPTGTLTTAV (74 aa)) form a disordered region. Over residues 20-37 (PSDTVSLSDSDSDLSLPS) the composition is skewed to low complexity. A phosphoserine mark is found at Ser57, Ser64, Ser83, and Ser92. Residues 74-101 (VQPFHLRGMSSTFSQRSHSIFDCLESAA) are hom2; mediates interaction with the U5 snRNP complexes and required for spliceosomal tri-snRNP complex assembly. Residues 101–152 (ARQAPCSAPQTSVSDNGSFRRPVTPPSQTPARGLSRVHGNTGPTRVLPVPDY) are disordered. Over residues 108–117 (APQTSVSDNG) the composition is skewed to polar residues. Position 124 is a phosphothreonine (Thr124). An interaction with SNRNP200 region spans residues 146–300 (VLPVPDYVSH…SKKRSRDHFR (155 aa)). The hom3; mediates interaction with the U5 snRNP complexes stretch occupies residues 147–183 (LPVPDYVSHPERWTKYSLEDVSEASEQSNRDAALAFL). The segment at 198-238 (FNQDPSSCGEGRVVFTKPVRDSEARAERKRVLKKGVGSGAG) is hom4; necessary for interaction with the PRPF19 complex and required for spliceosomal tri-snRNP complex assembly. The residue at position 214 (Lys214) is an N6-acetyllysine. Residues 216-317 (VRDSEARAER…GPGSERGPSV (102 aa)) form a disordered region. Residues 240 to 250 (EAAVELAHLAG) are compositionally biased toward low complexity.

Belongs to the TSSC4 family. Interacts in a RNA-independent manner with distinct U5 snRNP-containing complexes, the mono-U5 snRNP and the post-splicing U5 snRNP-PRPF19 complex. Interacts with SNRNP200; the interaction is direct, excludes recruitment of C9ORF78 and WBP4 to SNRNP200 and negatively regulates its RNA helicase activity. Interacts with PRPF8; the interaction is direct. Expressed in placenta. Widely expressed in embryo and newborn.

The protein localises to the nucleus. It is found in the cytoplasm. Protein associated with the U5 snRNP, during its maturation and its post-splicing recycling and which is required for spliceosomal tri-snRNP complex assembly in the nucleus. Has a molecular sequestering activity and transiently hinders SNRNP200 binding sites for constitutive splicing factors that intervene later during the assembly of the spliceosome and splicing. Together with its molecular sequestering activity, may also function as a molecular adapter and placeholder, coordinating the assembly of the U5 snRNP and its association with the U4/U6 di-snRNP. In Mus musculus (Mouse), this protein is U5 small nuclear ribonucleoprotein TSSC4.